We begin with the raw amino-acid sequence, 313 residues long: Porphobilinogen deaminase (313 aa).

Cys242 bears the S-(dipyrrolylmethanemethyl)cysteine mark.

It belongs to the HMBS family. As to quaternary structure, monomer. Requires dipyrromethane as cofactor.

It catalyses the reaction 4 porphobilinogen + H2O = hydroxymethylbilane + 4 NH4(+). It functions in the pathway porphyrin-containing compound metabolism; protoporphyrin-IX biosynthesis; coproporphyrinogen-III from 5-aminolevulinate: step 2/4. In terms of biological role, tetrapolymerization of the monopyrrole PBG into the hydroxymethylbilane pre-uroporphyrinogen in several discrete steps. The polypeptide is Porphobilinogen deaminase (Pseudomonas paraeruginosa (strain DSM 24068 / PA7) (Pseudomonas aeruginosa (strain PA7))).